The chain runs to 85 residues: MNNKVHVLQGIVIRSKMQKSIVVSINRIVKHSMYKKFINRTTKIYVHDTNNISNVGDIVEITECRPISKTKCWKLTSIIKKYNSS.

Belongs to the universal ribosomal protein uS17 family. In terms of assembly, part of the 30S ribosomal subunit.

Functionally, one of the primary rRNA binding proteins, it binds specifically to the 5'-end of 16S ribosomal RNA. This chain is Small ribosomal subunit protein uS17, found in Blochmanniella floridana.